The chain runs to 536 residues: Glutamyl-tRNA(Gln) amidotransferase subunit B, mitochondrial (536 aa).

It belongs to the GatB/GatE family. GatB subfamily. As to quaternary structure, subunit of the heterotrimeric GatFAB amidotransferase (AdT) complex, composed of A, B and F subunits.

Its subcellular location is the mitochondrion. It carries out the reaction L-glutamyl-tRNA(Gln) + L-glutamine + ATP + H2O = L-glutaminyl-tRNA(Gln) + L-glutamate + ADP + phosphate + H(+). Allows the formation of correctly charged Gln-tRNA(Gln) through the transamidation of misacylated Glu-tRNA(Gln) in the mitochondria. The reaction takes place in the presence of glutamine and ATP through an activated gamma-phospho-Glu-tRNA(Gln). This is Glutamyl-tRNA(Gln) amidotransferase subunit B, mitochondrial from Vanderwaltozyma polyspora (strain ATCC 22028 / DSM 70294 / BCRC 21397 / CBS 2163 / NBRC 10782 / NRRL Y-8283 / UCD 57-17) (Kluyveromyces polysporus).